Here is a 417-residue protein sequence, read N- to C-terminus: Multifunctional CCA protein (417 aa).

ATP contacts are provided by glycine 8 and arginine 11. CTP contacts are provided by glycine 8 and arginine 11. Residues aspartate 21 and aspartate 23 each coordinate Mg(2+). ATP contacts are provided by arginine 91, arginine 137, and arginine 140. Positions 91, 137, and 140 each coordinate CTP. The region spanning 225–326 (SGIHTLMTLQ…LNVLKKTDAF (102 aa)) is the HD domain.

It belongs to the tRNA nucleotidyltransferase/poly(A) polymerase family. Bacterial CCA-adding enzyme type 1 subfamily. As to quaternary structure, monomer. Can also form homodimers and oligomers. Mg(2+) is required as a cofactor. The cofactor is Ni(2+).

The enzyme catalyses a tRNA precursor + 2 CTP + ATP = a tRNA with a 3' CCA end + 3 diphosphate. The catalysed reaction is a tRNA with a 3' CCA end + 2 CTP + ATP = a tRNA with a 3' CCACCA end + 3 diphosphate. Catalyzes the addition and repair of the essential 3'-terminal CCA sequence in tRNAs without using a nucleic acid template. Adds these three nucleotides in the order of C, C, and A to the tRNA nucleotide-73, using CTP and ATP as substrates and producing inorganic pyrophosphate. tRNA 3'-terminal CCA addition is required both for tRNA processing and repair. Also involved in tRNA surveillance by mediating tandem CCA addition to generate a CCACCA at the 3' terminus of unstable tRNAs. While stable tRNAs receive only 3'-terminal CCA, unstable tRNAs are marked with CCACCA and rapidly degraded. This is Multifunctional CCA protein from Neisseria meningitidis serogroup B (strain ATCC BAA-335 / MC58).